The chain runs to 550 residues: Chaperonin GroEL (550 aa).

Residues 30 to 33 (TLGP), K51, 87 to 91 (DGTTT), G415, 479 to 481 (NAA), and D495 each bind ATP.

Belongs to the chaperonin (HSP60) family. In terms of assembly, forms a cylinder of 14 subunits composed of two heptameric rings stacked back-to-back. Interacts with the co-chaperonin GroES.

The protein localises to the cytoplasm. The catalysed reaction is ATP + H2O + a folded polypeptide = ADP + phosphate + an unfolded polypeptide.. Functionally, together with its co-chaperonin GroES, plays an essential role in assisting protein folding. The GroEL-GroES system forms a nano-cage that allows encapsulation of the non-native substrate proteins and provides a physical environment optimized to promote and accelerate protein folding. In Marinobacter nauticus (strain ATCC 700491 / DSM 11845 / VT8) (Marinobacter aquaeolei), this protein is Chaperonin GroEL.